Consider the following 257-residue polypeptide: MLLGVNIDHIAVLREARQVNDPDILMGMYAAIIGGADQITTHLREDRRHINENDVKDIINHSRVPVNLECSINEEIIDFVCKFRPHRATLVPEKREELTTEGGLNLSTAGLENIINRLKNEGIKVSLFIDTSRENIDIASELAVDCIELHTGTYANIFNMLNSNIALTKYSIKNYEKSREDLQNLLKDELANIKHLAAYAKGLGLKVAAGHGLNYQNVASLTKNSEIFELNIGQSIIARAIFVGMKTAVCEMKELIK.

3-amino-2-oxopropyl phosphate is bound at residue N6. 8–9 (DH) is a 1-deoxy-D-xylulose 5-phosphate binding site. R17 lines the 3-amino-2-oxopropyl phosphate pocket. Catalysis depends on H42, which acts as the Proton acceptor. R44 and H49 together coordinate 1-deoxy-D-xylulose 5-phosphate. The Proton acceptor role is filled by E69. Residue T99 participates in 1-deoxy-D-xylulose 5-phosphate binding. H211 acts as the Proton donor in catalysis. 3-amino-2-oxopropyl phosphate is bound by residues G212 and 233 to 234 (GQ).

It belongs to the PNP synthase family. As to quaternary structure, homooctamer; tetramer of dimers.

The protein resides in the cytoplasm. It catalyses the reaction 3-amino-2-oxopropyl phosphate + 1-deoxy-D-xylulose 5-phosphate = pyridoxine 5'-phosphate + phosphate + 2 H2O + H(+). It functions in the pathway cofactor biosynthesis; pyridoxine 5'-phosphate biosynthesis; pyridoxine 5'-phosphate from D-erythrose 4-phosphate: step 5/5. Functionally, catalyzes the complicated ring closure reaction between the two acyclic compounds 1-deoxy-D-xylulose-5-phosphate (DXP) and 3-amino-2-oxopropyl phosphate (1-amino-acetone-3-phosphate or AAP) to form pyridoxine 5'-phosphate (PNP) and inorganic phosphate. The chain is Pyridoxine 5'-phosphate synthase from Campylobacter hominis (strain ATCC BAA-381 / DSM 21671 / CCUG 45161 / LMG 19568 / NCTC 13146 / CH001A).